The chain runs to 416 residues: Interleukin-1 receptor type 2 (416 aa).

An N-terminal signal peptide occupies residues 1–13 (MFILLVLVTGVSA). At 14 to 355 (FTTPAVVHTG…FQSLHTTVKE (342 aa)) the chain is on the extracellular side. Ig-like C2-type domains are found at residues 29-136 (PVTS…LELK), 146-233 (PLVS…YNIT), and 249-357 (PVII…KEVS). Intrachain disulfides connect Cys-42-Cys-128, Cys-64-Cys-120, and Cys-164-Cys-219. Residues Asn-124, Asn-208, Asn-231, and Asn-289 are each glycosylated (N-linked (GlcNAc...) asparagine). Residues Cys-270 and Cys-338 are joined by a disulfide bond. The helical transmembrane segment at 356-381 (VSSTFSWGIALAPLSLIILVVGAIWI) threads the bilayer. The Cytoplasmic portion of the chain corresponds to 382 to 416 (RRRCKRQAGKTYGLTKLPTDNQDFPSSPNQIKEMK). The disordered stretch occupies residues 396–416 (TKLPTDNQDFPSSPNQIKEMK). Over residues 399–416 (PTDNQDFPSSPNQIKEMK) the composition is skewed to polar residues.

It belongs to the interleukin-1 receptor family. Associates with IL1RAP to form a non-signaling interleukin-1 receptor complex. In terms of processing, a soluble form (sIL1R2) can also be produced by proteolytic cleavage at the cell surface (shedding) involving a metalloproteinase.

It is found in the membrane. The protein localises to the cell membrane. The protein resides in the secreted. Non-signaling receptor for IL1A, IL1B and IL1RN. Reduces IL1B activities. Serves as a decoy receptor by competitive binding to IL1B and preventing its binding to IL1R1. Also modulates cellular response through non-signaling association with IL1RAP after binding to IL1B. IL1R2 (membrane and secreted forms) preferentially binds IL1B and poorly IL1A and IL1RN. The secreted IL1R2 recruits secreted IL1RAP with high affinity; this complex formation may be the dominant mechanism for neutralization of IL1B by secreted/soluble receptors. The polypeptide is Interleukin-1 receptor type 2 (Il1r2) (Rattus norvegicus (Rat)).